Reading from the N-terminus, the 415-residue chain is Alpha-2Db adrenergic receptor (415 aa).

At 1-33 (MDLSTITFLLPNSSEDTNGTSAPRLPPHSQCAS) the chain is on the extracellular side. N-linked (GlcNAc...) asparagine glycosylation is found at Asn-12 and Asn-18. Residues 34 to 58 (VLIVLVVTVIILVTIVGNVLVVVAV) form a helical membrane-spanning segment. The Cytoplasmic segment spans residues 59-70 (FTSRALRAPQNL). A helical transmembrane segment spans residues 71–96 (FLVSLAAADILVATLVIPFSLANEVM). At 97 to 106 (GYWYLGSTWC) the chain is on the extracellular side. Cys-106 and Cys-179 are oxidised to a cystine. The chain crosses the membrane as a helical span at residues 107–129 (AFYLALDVLFCTSSIVHLCAISL). Topologically, residues 130–150 (DRYWSVTKAVSYNLKRTPRRI) are cytoplasmic. A helical transmembrane segment spans residues 151–173 (KIMITVVWVISAVISFPPLLMTK). Residues 174–184 (HDELECLLNNE) are Extracellular-facing. Asn-183 is a glycosylation site (N-linked (GlcNAc...) asparagine). Residues 185-208 (TWYILSSCIVSFFAPGLIMILVYC) form a helical membrane-spanning segment. Residues 209–339 (RIYRVAKQRA…QMREKRFTFV (131 aa)) are Cytoplasmic-facing. Positions 234 to 299 (QSETCFVRKG…EGAQSCPKPN (66 aa)) are disordered. The segment covering 276–286 (NRHRNSRFAKS) has biased composition (basic residues). A helical transmembrane segment spans residues 340–363 (LAVVMGVFVLCWFPFFFTYSLHAI). The Extracellular segment spans residues 364–376 (CRKSCTIPDSLFN). Residues 377–397 (LFFWIGYCNSSVNPIIYTIFN) form a helical membrane-spanning segment. At 398–415 (RDFRKAFKKIMCRHSTRT) the chain is on the cytoplasmic side.

It belongs to the G-protein coupled receptor 1 family. Adrenergic receptor subfamily. ADRA2D sub-subfamily.

Its subcellular location is the cell membrane. In terms of biological role, alpha-2 adrenergic receptors mediate the catecholamine-induced inhibition of adenylate cyclase through the action of G proteins. The order of potency for this receptor is dexmedetomidine &gt; norepinephrine = epinephrine &gt; oxymetazoline. In Danio rerio (Zebrafish), this protein is Alpha-2Db adrenergic receptor (adra2db).